Here is a 395-residue protein sequence, read N- to C-terminus: Chalcone synthase (395 aa).

Cys-169 is an active-site residue.

Belongs to the thiolase-like superfamily. Chalcone/stilbene synthases family.

It carries out the reaction (E)-4-coumaroyl-CoA + 3 malonyl-CoA + 3 H(+) = 2',4,4',6'-tetrahydroxychalcone + 3 CO2 + 4 CoA. Its pathway is secondary metabolite biosynthesis; flavonoid biosynthesis. In terms of biological role, the primary product of this enzyme is 4,2',4',6'-tetrahydroxychalcone (also termed naringenin-chalcone or chalcone) which can under specific conditions spontaneously isomerize into naringenin. The protein is Chalcone synthase (CHS) of Pinus strobus (Eastern white pine).